The primary structure comprises 338 residues: Glycerol-3-phosphate dehydrogenase [NAD(P)+] (338 aa).

S13, W14, and K108 together coordinate NADPH. Residues K108, G139, and S141 each contribute to the sn-glycerol 3-phosphate site. A143 serves as a coordination point for NADPH. 5 residues coordinate sn-glycerol 3-phosphate: K194, D247, S257, R258, and N259. Residue K194 is the Proton acceptor of the active site. R258 is an NADPH binding site. Positions 282 and 284 each coordinate NADPH.

This sequence belongs to the NAD-dependent glycerol-3-phosphate dehydrogenase family.

The protein localises to the cytoplasm. The enzyme catalyses sn-glycerol 3-phosphate + NAD(+) = dihydroxyacetone phosphate + NADH + H(+). It carries out the reaction sn-glycerol 3-phosphate + NADP(+) = dihydroxyacetone phosphate + NADPH + H(+). It functions in the pathway membrane lipid metabolism; glycerophospholipid metabolism. Functionally, catalyzes the reduction of the glycolytic intermediate dihydroxyacetone phosphate (DHAP) to sn-glycerol 3-phosphate (G3P), the key precursor for phospholipid synthesis. This chain is Glycerol-3-phosphate dehydrogenase [NAD(P)+], found in Streptococcus pneumoniae serotype 19F (strain G54).